The primary structure comprises 257 residues: Ribosomal RNA small subunit methyltransferase A (257 aa).

The S-adenosyl-L-methionine site is built by asparagine 12, leucine 14, glycine 39, glutamate 60, aspartate 85, and asparagine 105.

Belongs to the class I-like SAM-binding methyltransferase superfamily. rRNA adenine N(6)-methyltransferase family. RsmA subfamily.

The protein resides in the cytoplasm. The enzyme catalyses adenosine(1518)/adenosine(1519) in 16S rRNA + 4 S-adenosyl-L-methionine = N(6)-dimethyladenosine(1518)/N(6)-dimethyladenosine(1519) in 16S rRNA + 4 S-adenosyl-L-homocysteine + 4 H(+). In terms of biological role, specifically dimethylates two adjacent adenosines (A1518 and A1519) in the loop of a conserved hairpin near the 3'-end of 16S rRNA in the 30S particle. May play a critical role in biogenesis of 30S subunits. The chain is Ribosomal RNA small subunit methyltransferase A from Methylococcus capsulatus (strain ATCC 33009 / NCIMB 11132 / Bath).